Here is a 40-residue protein sequence, read N- to C-terminus: MADTTGRIPLWIIGTVAGILVIGLIGIFFYGSYSGLGSSL.

The chain crosses the membrane as a helical span at residues 8-28 (IPLWIIGTVAGILVIGLIGIF).

Belongs to the PsbJ family. PSII is composed of 1 copy each of membrane proteins PsbA, PsbB, PsbC, PsbD, PsbE, PsbF, PsbH, PsbI, PsbJ, PsbK, PsbL, PsbM, PsbT, PsbX, PsbY, PsbZ, Psb30/Ycf12, at least 3 peripheral proteins of the oxygen-evolving complex and a large number of cofactors. It forms dimeric complexes.

The protein resides in the plastid. Its subcellular location is the chloroplast thylakoid membrane. Its function is as follows. One of the components of the core complex of photosystem II (PSII). PSII is a light-driven water:plastoquinone oxidoreductase that uses light energy to abstract electrons from H(2)O, generating O(2) and a proton gradient subsequently used for ATP formation. It consists of a core antenna complex that captures photons, and an electron transfer chain that converts photonic excitation into a charge separation. This is Photosystem II reaction center protein J from Nicotiana sylvestris (Wood tobacco).